A 146-amino-acid polypeptide reads, in one-letter code: Snaclec 1 (146 aa).

The first 23 residues, 1-23, serve as a signal peptide directing secretion; that stretch reads MGRFIFMSFGLLVVFLSLSGTGA. Intrachain disulfides connect C25–C36, C53–C142, and C119–C134. Residues 32–143 enclose the C-type lectin domain; sequence YEGHCYRVFQ…CSRTYSFVCK (112 aa).

Belongs to the snaclec family. As to quaternary structure, heterodimer; disulfide-linked. As to expression, expressed by the venom gland.

It is found in the secreted. Interferes with one step of hemostasis (modulation of platelet aggregation, or coagulation cascade, for example). The chain is Snaclec 1 from Sistrurus catenatus edwardsii (Desert massasauga).